We begin with the raw amino-acid sequence, 344 residues long: S-methyl-5'-thioadenosine phosphorylase (344 aa).

Residues Thr-45, Arg-88–His-89, and Ser-121–Ala-122 contribute to the phosphate site. Met-238 contributes to the substrate binding site. Ser-239 is a phosphate binding site. Substrate is bound at residue Asp-262–Asp-264.

The protein belongs to the PNP/MTAP phosphorylase family. MTAP subfamily. In terms of assembly, homotrimer.

It localises to the cytoplasm. Its subcellular location is the nucleus. It catalyses the reaction S-methyl-5'-thioadenosine + phosphate = 5-(methylsulfanyl)-alpha-D-ribose 1-phosphate + adenine. It participates in amino-acid biosynthesis; L-methionine biosynthesis via salvage pathway; S-methyl-5-thio-alpha-D-ribose 1-phosphate from S-methyl-5'-thioadenosine (phosphorylase route): step 1/1. Functionally, catalyzes the reversible phosphorylation of S-methyl-5'-thioadenosine (MTA) to adenine and 5-methylthioribose-1-phosphate. Involved in the breakdown of MTA, a major by-product of polyamine biosynthesis. Responsible for the first step in the methionine salvage pathway after MTA has been generated from S-adenosylmethionine. Has broad substrate specificity with 6-aminopurine nucleosides as preferred substrates. The polypeptide is S-methyl-5'-thioadenosine phosphorylase (Candida albicans (strain WO-1) (Yeast)).